The sequence spans 87 residues: Acylphosphatase (87 aa).

An Acylphosphatase-like domain is found at 2–87 (RLTALVSGTV…ATGLRDFHVY (86 aa)). Catalysis depends on residues Arg17 and Asn35.

The protein belongs to the acylphosphatase family.

It catalyses the reaction an acyl phosphate + H2O = a carboxylate + phosphate + H(+). The sequence is that of Acylphosphatase (acyP) from Deinococcus geothermalis (strain DSM 11300 / CIP 105573 / AG-3a).